The sequence spans 114 residues: Putative small ubiquitin-related modifier 4 (114 aa).

Positions 1 to 20 (MSTTSRVGSNEVKMEGQKRK) are disordered. Positions 26–104 (THVTLKVKGQ…IDAMLCQQSG (79 aa)) constitute a Ubiquitin-like domain. Residue glycine 104 forms a Glycyl lysine isopeptide (Gly-Lys) (interchain with K-? in acceptor proteins) linkage.

The protein belongs to the ubiquitin family. SUMO subfamily. In terms of assembly, interacts with SAE2, SCE1, SIZ1 and MMS21 Covalently attached to a number of proteins.

It localises to the nucleus. Its subcellular location is the cytoplasm. Its function is as follows. Ubiquitin-like protein which can be covalently attached to target lysines as a monomer. Does not seem to be involved in protein degradation and may function as an antagonist of ubiquitin in the degradation process. This chain is Putative small ubiquitin-related modifier 4 (SUMO4), found in Arabidopsis thaliana (Mouse-ear cress).